Consider the following 42-residue polypeptide: Aspartate-semialdehyde dehydrogenase leader peptide (42 aa).

The sequence is that of Aspartate-semialdehyde dehydrogenase leader peptide from Streptococcus mutans serotype c (strain ATCC 700610 / UA159).